We begin with the raw amino-acid sequence, 53 residues long: Sec-independent protein translocase protein TatA (53 aa).

The helical transmembrane segment at Met-1–Ala-21 threads the bilayer.

The protein belongs to the TatA/E family. The Tat system comprises two distinct complexes: a TatABC complex, containing multiple copies of TatA, TatB and TatC subunits, and a separate TatA complex, containing only TatA subunits. Substrates initially bind to the TatABC complex, which probably triggers association of the separate TatA complex to form the active translocon.

It localises to the cell inner membrane. Part of the twin-arginine translocation (Tat) system that transports large folded proteins containing a characteristic twin-arginine motif in their signal peptide across membranes. TatA could form the protein-conducting channel of the Tat system. In Rickettsia typhi (strain ATCC VR-144 / Wilmington), this protein is Sec-independent protein translocase protein TatA.